Consider the following 199-residue polypeptide: Replication protein (199 aa).

The protein belongs to the Gram-positive plasmids replication protein type 2 family.

Its function is as follows. Is essential for plasmid replication. Nicks the positive strand at the plus origin of replication. This is Replication protein (repF) from Staphylococcus aureus.